Consider the following 203-residue polypeptide: MHNAPESVLNALVPMVVEQTAKGERSYDIYSRLLKERVIFLVGQVEEHMANLIVAQLLFLESESPDKDIYLYINSPGGSVTAGMAIYDTMQFIKPNVSTVCMGQAASMGAFLLAGGAKGKRHCLPNSRVMIHQPLGGFQGQASDIAIHAKEILGIKNKLNQMLAEHTGQPLDIIERDTDRDNFMSATQAVEYGIVDSLLTSRG.

Serine 107 functions as the Nucleophile in the catalytic mechanism. Residue histidine 132 is part of the active site.

It belongs to the peptidase S14 family. Fourteen ClpP subunits assemble into 2 heptameric rings which stack back to back to give a disk-like structure with a central cavity, resembling the structure of eukaryotic proteasomes.

The protein resides in the cytoplasm. The enzyme catalyses Hydrolysis of proteins to small peptides in the presence of ATP and magnesium. alpha-casein is the usual test substrate. In the absence of ATP, only oligopeptides shorter than five residues are hydrolyzed (such as succinyl-Leu-Tyr-|-NHMec, and Leu-Tyr-Leu-|-Tyr-Trp, in which cleavage of the -Tyr-|-Leu- and -Tyr-|-Trp bonds also occurs).. In terms of biological role, cleaves peptides in various proteins in a process that requires ATP hydrolysis. Has a chymotrypsin-like activity. Plays a major role in the degradation of misfolded proteins. The chain is ATP-dependent Clp protease proteolytic subunit from Shewanella frigidimarina (strain NCIMB 400).